The following is a 497-amino-acid chain: Chlorophyllide reductase 52.5 kDa chain (497 aa).

Transmembrane regions (helical) follow at residues Val65–Ile82, Ala126–Leu142, and Met216–Val233.

The protein belongs to the BchN/ChlN family. Chlorophyllide reductase is composed of three subunits; BchX, BchY and BchZ. Forms a heterodimer of one BchY and one BchZ subunit.

The protein localises to the cell membrane. The enzyme catalyses 3-deacetyl-3-vinylbacteriochlorophyllide a + 2 oxidized [2Fe-2S]-[ferredoxin] + ADP + phosphate = chlorophyllide a + 2 reduced [2Fe-2S]-[ferredoxin] + ATP + H2O + H(+). It carries out the reaction bacteriochlorophyllide a + 2 oxidized [2Fe-2S]-[ferredoxin] + ADP + phosphate = 3-acetyl-3-devinylchlorophyllide a + 2 reduced [2Fe-2S]-[ferredoxin] + ATP + H2O + H(+). It catalyses the reaction 3-deacetyl-3-(1-hydroxyethyl)bacteriochlorophyllide a + 2 oxidized [2Fe-2S]-[ferredoxin] + ADP + phosphate = 3-devinyl-3-(1-hydroxyethyl)chlorophyllide a + 2 reduced [2Fe-2S]-[ferredoxin] + ATP + H2O + H(+). The protein operates within porphyrin-containing compound metabolism; bacteriochlorophyll biosynthesis (light-independent). Converts chlorophylls (Chl) into bacteriochlorophylls (BChl) by reducing ring B of the tetrapyrrole. This is Chlorophyllide reductase 52.5 kDa chain (bchY) from Rhodobacter capsulatus (strain ATCC BAA-309 / NBRC 16581 / SB1003).